Reading from the N-terminus, the 104-residue chain is uncharacterized protein (104 aa).

In terms of assembly, homodimer.

This is an uncharacterized protein from Bacillus subtilis (strain 168).